Consider the following 146-residue polypeptide: Hemoglobin subunit beta-2 (146 aa).

Residue Val1 is modified to N-acetylvaline. Positions 2–146 (HLHGDEKAAV…VASALAHKYH (145 aa)) constitute a Globin domain. Lys17 is subject to N6-succinyllysine. Phosphoserine is present on Ser44. Lys59 carries the N6-succinyllysine modification. His63 and His92 together coordinate heme b. Asymmetric dimethylarginine is present on Arg104. Residue Thr123 is modified to Phosphothreonine.

The protein belongs to the globin family. In terms of assembly, heterotetramer of two alpha chains and two beta chains. As to expression, red blood cells.

Involved in oxygen transport from the lung to the various peripheral tissues. This chain is Hemoglobin subunit beta-2 (HBB2), found in Tapirus terrestris (Lowland tapir).